The chain runs to 175 residues: MNLDFIKSKIAAVPDFPKPGIMFRDITPLLADPQGLRKTAEAMAQELKNKGIQPTIVAGTESRGFIFGVALAEVLGLGFVPVRKPGKLPRATYSVKYDLEYGSDSLEIHQDAFKVTDEVLVVDDLLATGGTAKATVDLIEKTQAKVAGLIFVMELDGLGGREVLAGYNVSALIKF.

The protein belongs to the purine/pyrimidine phosphoribosyltransferase family. In terms of assembly, homodimer.

It is found in the cytoplasm. The enzyme catalyses AMP + diphosphate = 5-phospho-alpha-D-ribose 1-diphosphate + adenine. Its pathway is purine metabolism; AMP biosynthesis via salvage pathway; AMP from adenine: step 1/1. In terms of biological role, catalyzes a salvage reaction resulting in the formation of AMP, that is energically less costly than de novo synthesis. The chain is Adenine phosphoribosyltransferase from Francisella tularensis subsp. tularensis (strain FSC 198).